A 596-amino-acid chain; its full sequence is Arginine--tRNA ligase (596 aa).

Positions 127 to 137 match the 'HIGH' region motif; it reads ANPTGPVHVGR.

It belongs to the class-I aminoacyl-tRNA synthetase family.

It localises to the cytoplasm. The enzyme catalyses tRNA(Arg) + L-arginine + ATP = L-arginyl-tRNA(Arg) + AMP + diphosphate. The sequence is that of Arginine--tRNA ligase from Haloquadratum walsbyi (strain DSM 16790 / HBSQ001).